The chain runs to 196 residues: ATP-dependent Clp protease proteolytic subunit (196 aa).

Ser98 functions as the Nucleophile in the catalytic mechanism. The active site involves His123.

The protein belongs to the peptidase S14 family. Fourteen ClpP subunits assemble into 2 heptameric rings which stack back to back to give a disk-like structure with a central cavity, resembling the structure of eukaryotic proteasomes.

The protein localises to the cytoplasm. It carries out the reaction Hydrolysis of proteins to small peptides in the presence of ATP and magnesium. alpha-casein is the usual test substrate. In the absence of ATP, only oligopeptides shorter than five residues are hydrolyzed (such as succinyl-Leu-Tyr-|-NHMec, and Leu-Tyr-Leu-|-Tyr-Trp, in which cleavage of the -Tyr-|-Leu- and -Tyr-|-Trp bonds also occurs).. Its function is as follows. Cleaves peptides in various proteins in a process that requires ATP hydrolysis. Has a chymotrypsin-like activity. Plays a major role in the degradation of misfolded proteins. This Lactiplantibacillus plantarum (strain ATCC BAA-793 / NCIMB 8826 / WCFS1) (Lactobacillus plantarum) protein is ATP-dependent Clp protease proteolytic subunit.